We begin with the raw amino-acid sequence, 207 residues long: Calcipressin-like protein (207 aa).

A required for tax-6 interaction region spans residues 176-181 (PAIIVH).

The protein belongs to the RCAN family. In terms of assembly, interacts with tax-6 (via catalytic domain); the interaction is calcium-dependent. In terms of tissue distribution, expressed in lateral hypodermal cells, marginal cells of the pharynx, vulva epithelial cells, ventral and dorsal nerve cords and commissures and various neurons in the anterior and posterior regions. Expressed in male tail structures including the diagonal muscles, sensory rays and spicules. Expressed in PHC neurons and most tail neurons and support cells of the phasmid neurons. Also expressed in pharyngeal muscle, head neurons, excretory canal cells and hypodermal seam cells.

Inhibits tax-6/calcineurin A phosphatase activity and thereby negatively regulates calcineurin-mediated functions. Plays a role in modulating temperature-dependent calcium responses in AFD neurons and in addition, also negatively regulates thermotaxis in a tax-6-dependent manner in AFD neurons. In response to changes in intracellular calcium levels may also regulate nuclear translocation of transcriptional regulators such as crtc-1. May play a role in regulating body size. Plays a role in male tail tip morphogenesis. The chain is Calcipressin-like protein from Caenorhabditis elegans.